The sequence spans 360 residues: S-adenosylmethionine:tRNA ribosyltransferase-isomerase (360 aa).

This sequence belongs to the QueA family. Monomer.

The protein localises to the cytoplasm. It carries out the reaction 7-aminomethyl-7-carbaguanosine(34) in tRNA + S-adenosyl-L-methionine = epoxyqueuosine(34) in tRNA + adenine + L-methionine + 2 H(+). It participates in tRNA modification; tRNA-queuosine biosynthesis. In terms of biological role, transfers and isomerizes the ribose moiety from AdoMet to the 7-aminomethyl group of 7-deazaguanine (preQ1-tRNA) to give epoxyqueuosine (oQ-tRNA). This chain is S-adenosylmethionine:tRNA ribosyltransferase-isomerase, found in Nitrobacter winogradskyi (strain ATCC 25391 / DSM 10237 / CIP 104748 / NCIMB 11846 / Nb-255).